Here is a 306-residue protein sequence, read N- to C-terminus: Homoserine kinase (306 aa).

An ATP-binding site is contributed by P91–T101.

The protein belongs to the GHMP kinase family. Homoserine kinase subfamily.

Its subcellular location is the cytoplasm. It catalyses the reaction L-homoserine + ATP = O-phospho-L-homoserine + ADP + H(+). It participates in amino-acid biosynthesis; L-threonine biosynthesis; L-threonine from L-aspartate: step 4/5. In terms of biological role, catalyzes the ATP-dependent phosphorylation of L-homoserine to L-homoserine phosphate. The polypeptide is Homoserine kinase (Synechocystis sp. (strain ATCC 27184 / PCC 6803 / Kazusa)).